The sequence spans 186 residues: Ribosome-recycling factor (186 aa).

The protein belongs to the RRF family.

Its subcellular location is the cytoplasm. Responsible for the release of ribosomes from messenger RNA at the termination of protein biosynthesis. May increase the efficiency of translation by recycling ribosomes from one round of translation to another. This is Ribosome-recycling factor from Burkholderia thailandensis (strain ATCC 700388 / DSM 13276 / CCUG 48851 / CIP 106301 / E264).